Here is a 176-residue protein sequence, read N- to C-terminus: Nucleoside triphosphate/diphosphate phosphatase (176 aa).

R23 (proton donor) is an active-site residue. 6 residues coordinate Mg(2+): N87, D103, D105, D107, D120, and E123.

Belongs to the Ntdp family. Requires Mg(2+) as cofactor.

It catalyses the reaction a ribonucleoside 5'-triphosphate + H2O = a ribonucleoside 5'-diphosphate + phosphate + H(+). The enzyme catalyses a ribonucleoside 5'-diphosphate + H2O = a ribonucleoside 5'-phosphate + phosphate + H(+). In terms of biological role, has nucleoside phosphatase activity towards nucleoside triphosphates and nucleoside diphosphates. The sequence is that of Nucleoside triphosphate/diphosphate phosphatase from Bacillus cytotoxicus (strain DSM 22905 / CIP 110041 / 391-98 / NVH 391-98).